Here is a 138-residue protein sequence, read N- to C-terminus: Large-conductance mechanosensitive channel (138 aa).

The next 3 membrane-spanning stretches (helical) occupy residues 19 to 39 (VGVI…GDVI), 40 to 60 (MPVI…IGLS), and 81 to 101 (GSFL…FIVI).

Belongs to the MscL family. In terms of assembly, homopentamer.

It localises to the cell inner membrane. Its function is as follows. Channel that opens in response to stretch forces in the membrane lipid bilayer. May participate in the regulation of osmotic pressure changes within the cell. In Afipia carboxidovorans (strain ATCC 49405 / DSM 1227 / KCTC 32145 / OM5) (Oligotropha carboxidovorans), this protein is Large-conductance mechanosensitive channel.